The primary structure comprises 201 residues: Holliday junction branch migration complex subunit RuvA (201 aa).

Residues 1–64 (MFAYIKGVLA…EFSHTLYGFL (64 aa)) are domain I. Residues 65 to 143 (SYQERDIFEI…AIGHLDTSDH (79 aa)) form a domain II region. A flexible linker region spans residues 144-153 (IEPLTQDPKS). The tract at residues 153-201 (SKSVQDAMLALINLGYNQTTAQKAIKQGMKELPEEIDLAQLITVALKHV) is domain III.

It belongs to the RuvA family. In terms of assembly, homotetramer. Forms an RuvA(8)-RuvB(12)-Holliday junction (HJ) complex. HJ DNA is sandwiched between 2 RuvA tetramers; dsDNA enters through RuvA and exits via RuvB. An RuvB hexamer assembles on each DNA strand where it exits the tetramer. Each RuvB hexamer is contacted by two RuvA subunits (via domain III) on 2 adjacent RuvB subunits; this complex drives branch migration. In the full resolvosome a probable DNA-RuvA(4)-RuvB(12)-RuvC(2) complex forms which resolves the HJ.

It is found in the cytoplasm. Functionally, the RuvA-RuvB-RuvC complex processes Holliday junction (HJ) DNA during genetic recombination and DNA repair, while the RuvA-RuvB complex plays an important role in the rescue of blocked DNA replication forks via replication fork reversal (RFR). RuvA specifically binds to HJ cruciform DNA, conferring on it an open structure. The RuvB hexamer acts as an ATP-dependent pump, pulling dsDNA into and through the RuvAB complex. HJ branch migration allows RuvC to scan DNA until it finds its consensus sequence, where it cleaves and resolves the cruciform DNA. This Protochlamydia amoebophila (strain UWE25) protein is Holliday junction branch migration complex subunit RuvA.